We begin with the raw amino-acid sequence, 233 residues long: DNA repair protein RecO (233 aa).

It belongs to the RecO family.

Its function is as follows. Involved in DNA repair and RecF pathway recombination. This is DNA repair protein RecO from Pseudomonas aeruginosa (strain LESB58).